The following is a 208-amino-acid chain: V-type ATP synthase subunit D (208 aa).

This sequence belongs to the V-ATPase D subunit family.

Its function is as follows. Produces ATP from ADP in the presence of a proton gradient across the membrane. The polypeptide is V-type ATP synthase subunit D (Chlamydia abortus (strain DSM 27085 / S26/3) (Chlamydophila abortus)).